The following is a 264-amino-acid chain: Carbonic anhydrase (264 aa).

Residues 1 to 33 (MSSTLYRRQLLKLLGMSVLGTSFSSCVTSPARA) constitute a signal peptide (tat-type signal). Positions 36-264 (VNWGYIGKVG…LNDRLVIEAI (229 aa)) constitute an Alpha-carbonic anhydrase domain. Zn(2+) contacts are provided by His127, His129, and His146. Substrate is bound at residue 214–215 (TT).

It belongs to the alpha-carbonic anhydrase family. Zn(2+) is required as a cofactor. Post-translationally, predicted to be exported by the Tat system. The position of the signal peptide cleavage has not been experimentally proven.

The catalysed reaction is hydrogencarbonate + H(+) = CO2 + H2O. Functionally, reversible hydration of carbon dioxide. The polypeptide is Carbonic anhydrase (ecaA) (Nostoc sp. (strain PCC 7120 / SAG 25.82 / UTEX 2576)).